The primary structure comprises 610 residues: Elongation factor 4 (610 aa).

The tr-type G domain occupies 15–197 (KSIRNFSIIA…RIINDIPYPK (183 aa)). Residues 27-32 (DHGKST) and 144-147 (NKID) each bind GTP.

It belongs to the TRAFAC class translation factor GTPase superfamily. Classic translation factor GTPase family. LepA subfamily.

It localises to the cell membrane. The catalysed reaction is GTP + H2O = GDP + phosphate + H(+). In terms of biological role, required for accurate and efficient protein synthesis under certain stress conditions. May act as a fidelity factor of the translation reaction, by catalyzing a one-codon backward translocation of tRNAs on improperly translocated ribosomes. Back-translocation proceeds from a post-translocation (POST) complex to a pre-translocation (PRE) complex, thus giving elongation factor G a second chance to translocate the tRNAs correctly. Binds to ribosomes in a GTP-dependent manner. In Buchnera aphidicola subsp. Acyrthosiphon pisum (strain APS) (Acyrthosiphon pisum symbiotic bacterium), this protein is Elongation factor 4.